The primary structure comprises 122 residues: UPF0231 protein VF_2154 (122 aa).

It belongs to the UPF0231 family.

This is UPF0231 protein VF_2154 from Aliivibrio fischeri (strain ATCC 700601 / ES114) (Vibrio fischeri).